A 242-amino-acid polypeptide reads, in one-letter code: DnaJ homolog subfamily B member 3 (242 aa).

The 69-residue stretch at 1 to 69 (MVDYYEVLGV…RKREVYDRCG (69 aa)) folds into the J domain.

Testis specific. Expression is confined to the germline without any contribution of the somatic components.

Functionally, may operate as a co-chaperone of the male germ cell- and haploid stage-specific Hsp70 proteins. In Mus musculus (Mouse), this protein is DnaJ homolog subfamily B member 3 (Dnajb3).